Reading from the N-terminus, the 136-residue chain is MVESIARVRHIRVTPMKARRVVNMIRGKQAQEALAILKFAPQGASEPVYKLVASAIANARVKADQSNTYLDEQDLYVSRAFVDEGTTLKRFQPRAQGRAFRINKRTSHITVVLATPDEAEAAQPAKKASTAKKASN.

It belongs to the universal ribosomal protein uL22 family. As to quaternary structure, part of the 50S ribosomal subunit.

This protein binds specifically to 23S rRNA; its binding is stimulated by other ribosomal proteins, e.g. L4, L17, and L20. It is important during the early stages of 50S assembly. It makes multiple contacts with different domains of the 23S rRNA in the assembled 50S subunit and ribosome. In terms of biological role, the globular domain of the protein is located near the polypeptide exit tunnel on the outside of the subunit, while an extended beta-hairpin is found that lines the wall of the exit tunnel in the center of the 70S ribosome. The protein is Large ribosomal subunit protein uL22 of Leifsonia xyli subsp. xyli (strain CTCB07).